A 226-amino-acid chain; its full sequence is NADH-ubiquinone oxidoreductase chain 6 (226 aa).

The next 5 helical transmembrane spans lie at 2 to 22 (STLGLLIMLLGIIIMCTLVIL), 28 to 48 (IYSILNLIVIYGCYASILLTV), 56 to 76 (IYILVNVGAIAVLFLFIVMMI), 90 to 110 (YNIYMIVGIIGVVGLLGILIT), and 169 to 189 (IWFIMACIILLIGMVGVIYIT).

It belongs to the complex I subunit 6 family.

It is found in the mitochondrion membrane. It carries out the reaction a ubiquinone + NADH + 5 H(+)(in) = a ubiquinol + NAD(+) + 4 H(+)(out). Core subunit of the mitochondrial membrane respiratory chain NADH dehydrogenase (Complex I) that is believed to belong to the minimal assembly required for catalysis. Complex I functions in the transfer of electrons from NADH to the respiratory chain. The immediate electron acceptor for the enzyme is believed to be ubiquinone. In Dictyostelium discoideum (Social amoeba), this protein is NADH-ubiquinone oxidoreductase chain 6 (nad6).